Consider the following 60-residue polypeptide: Beta-defensin 8 (60 aa).

A signal peptide spans 1–22 (MRIHYLLFTFLLVLLSPLAAFS). The propeptide occupies 23-25 (QKI). Cystine bridges form between Cys31–Cys58, Cys38–Cys52, and Cys42–Cys59.

This sequence belongs to the beta-defensin family. Most highly expressed in testis and heart.

The protein localises to the secreted. In terms of biological role, a synthetic peptide displays antimicrobial activities against S.aureus, P.aeruginosa, E.coli and B.cepacia. The antimicrobial activity against S.aureus, E.coli and B.cepacia is reduced in raised concentration of NaCl, but its action against P.aeruginosa is independent of NaCl concentration. The chain is Beta-defensin 8 (Defb8) from Mus musculus (Mouse).